Consider the following 90-residue polypeptide: Lectin-1 (90 aa).

Pyrrolidone carboxylic acid is present on Gln1. A disulfide bridge connects residues Cys46 and Cys71.

Post-translationally, the N-terminus is blocked. In terms of processing, contains seven disulfide bonds. Proteolytically cleaved. Major form may consist of cleaved, disulfide-bonded subunits.

Functionally, lectin with specificity for complex N-linked glycans and O-linked glycans. Has hemagglutinating activity towards rabbit erythrocytes that is inhibited by N-acetyl-D-galactosamine. The sequence is that of Lectin-1 from Hypnea cervicornis (Brazilian red alga).